A 574-amino-acid chain; its full sequence is Septation ring formation regulator EzrA (574 aa).

Over 1–7 (MSSGIIL) the chain is Extracellular. The chain crosses the membrane as a helical span at residues 8–26 (LIVAIVLLVIIAYLVGVII). Residues 27-574 (RKRNDSLITS…YEKTREHIRF (548 aa)) are Cytoplasmic-facing. 3 coiled-coil regions span residues 102 to 141 (NFIR…EEKN), 274 to 350 (ELVT…ETES), and 459 to 520 (QLEA…SFEA).

This sequence belongs to the EzrA family.

It localises to the cell membrane. Its function is as follows. Negative regulator of FtsZ ring formation; modulates the frequency and position of FtsZ ring formation. Inhibits FtsZ ring formation at polar sites. Interacts either with FtsZ or with one of its binding partners to promote depolymerization. The protein is Septation ring formation regulator EzrA of Streptococcus pyogenes serotype M4 (strain MGAS10750).